A 96-amino-acid chain; its full sequence is MPKSHGFRKNTRDKLKKSVRERGISPVVRAIQDFAVGEKVHIIIDPSIHKGMPHPKFHGRTGTVVGRRGRAYVLEVPDQSAKKLVIALPEHLVAQK.

It belongs to the eukaryotic ribosomal protein eL21 family.

The polypeptide is Large ribosomal subunit protein eL21 (Methanothrix thermoacetophila (strain DSM 6194 / JCM 14653 / NBRC 101360 / PT) (Methanosaeta thermophila)).